The sequence spans 377 residues: Glutamate 5-kinase (377 aa).

Lysine 15 is a binding site for ATP. Substrate-binding residues include serine 56, aspartate 143, and asparagine 155. 175–176 (SD) lines the ATP pocket. A PUA domain is found at 281–358 (KGTLTIDAGA…PDVLIILGIS (78 aa)).

The protein belongs to the glutamate 5-kinase family.

The protein resides in the cytoplasm. It carries out the reaction L-glutamate + ATP = L-glutamyl 5-phosphate + ADP. Its pathway is amino-acid biosynthesis; L-proline biosynthesis; L-glutamate 5-semialdehyde from L-glutamate: step 1/2. Catalyzes the transfer of a phosphate group to glutamate to form L-glutamate 5-phosphate. The chain is Glutamate 5-kinase from Rhodopseudomonas palustris (strain BisA53).